The primary structure comprises 121 residues: UPF0102 protein XF_0554 (121 aa).

This sequence belongs to the UPF0102 family.

The polypeptide is UPF0102 protein XF_0554 (Xylella fastidiosa (strain 9a5c)).